Reading from the N-terminus, the 336-residue chain is NADH-quinone oxidoreductase subunit H (336 aa).

The next 8 helical transmembrane spans lie at tryptophan 17–isoleucine 37, alanine 85–methionine 105, leucine 116–threonine 136, alanine 154–leucine 174, valine 190–glutamate 210, valine 247–isoleucine 267, isoleucine 274–isoleucine 294, and phenylalanine 309–valine 329.

It belongs to the complex I subunit 1 family. In terms of assembly, NDH-1 is composed of 14 different subunits. Subunits NuoA, H, J, K, L, M, N constitute the membrane sector of the complex.

The protein resides in the cell membrane. It carries out the reaction a quinone + NADH + 5 H(+)(in) = a quinol + NAD(+) + 4 H(+)(out). In terms of biological role, NDH-1 shuttles electrons from NADH, via FMN and iron-sulfur (Fe-S) centers, to quinones in the respiratory chain. The immediate electron acceptor for the enzyme in this species is believed to be ubiquinone. Couples the redox reaction to proton translocation (for every two electrons transferred, four hydrogen ions are translocated across the cytoplasmic membrane), and thus conserves the redox energy in a proton gradient. This subunit may bind ubiquinone. The protein is NADH-quinone oxidoreductase subunit H of Brevibacillus brevis (strain 47 / JCM 6285 / NBRC 100599).